Reading from the N-terminus, the 146-residue chain is Heat-stable 19 kDa antigen (146 aa).

Positions 1–20 (MKFSLLSAIAAAVFVPFTSA) are cleaved as a signal peptide.

The protein belongs to the cerato-platanin family. In terms of processing, glycosylated.

The protein localises to the secreted. In Coccidioides posadasii (strain C735) (Valley fever fungus), this protein is Heat-stable 19 kDa antigen (CSA).